Consider the following 243-residue polypeptide: Ion-translocating oxidoreductase complex subunit E (243 aa).

A run of 6 helical transmembrane segments spans residues Leu-40–Leu-60, Ala-72–Leu-92, Asp-94–Gly-114, Ala-129–Ile-149, Ile-152–Phe-172, and Gly-183–Leu-203.

Belongs to the NqrDE/RnfAE family. In terms of assembly, the complex is composed of six subunits: RnfA, RnfB, RnfC, RnfD, RnfE and RnfG.

It localises to the cellular chromatophore membrane. Part of a membrane-bound complex that couples electron transfer with translocation of ions across the membrane. Required for nitrogen fixation. Involved in electron transfer to nitrogenase. This is Ion-translocating oxidoreductase complex subunit E from Rhodobacter capsulatus (Rhodopseudomonas capsulata).